A 169-amino-acid polypeptide reads, in one-letter code: Probable metallophosphoesterase YsnB (169 aa).

Residues Asp-8, His-10, Asp-35, Asn-54, His-78, His-107, and His-109 each coordinate Mn(2+).

This sequence belongs to the metallophosphoesterase superfamily. YfcE family. Requires Mn(2+) as cofactor.

This chain is Probable metallophosphoesterase YsnB (ysnB), found in Bacillus subtilis (strain 168).